We begin with the raw amino-acid sequence, 393 residues long: Major outer membrane porin, serovar E (393 aa).

An N-terminal signal peptide occupies residues 1 to 22; sequence MKKLLKSVLVFAALSSASSLQA.

The protein belongs to the chlamydial porin (CP) (TC 1.B.2) family. As to quaternary structure, part of a disulfide cross-linked outer membrane complex (COMC) composed of the major outer membrane porin (MOMP), the small cysteine-rich protein (OmcA) and the large cysteine-rich periplasmic protein (OmcB).

The protein localises to the cell outer membrane. In elementary bodies (EBs, the infectious stage, which is able to survive outside the host cell) provides the structural integrity of the outer envelope through disulfide cross-links with the small cysteine-rich protein and the large cysteine-rich periplasmic protein. It has been described in publications as the Sarkosyl-insoluble COMC (Chlamydia outer membrane complex), and serves as the functional equivalent of peptidoglycan. In terms of biological role, permits diffusion of specific solutes through the outer membrane. The protein is Major outer membrane porin, serovar E (ompA) of Chlamydia trachomatis.